The primary structure comprises 479 residues: GTPase Obg (479 aa).

The 158-residue stretch at Thr-2–Val-159 folds into the Obg domain. Residues His-61–Leu-87 are disordered. An OBG-type G domain is found at Ala-160–Gly-331. GTP contacts are provided by residues Gly-166 to Ser-173, Phe-191 to Val-195, Asp-212 to Gly-215, Asn-283 to Asp-286, and Ser-312 to Val-314. Residues Ser-173 and Thr-193 each coordinate Mg(2+). One can recognise an OCT domain in the interval Pro-349–Pro-431. A compositionally biased stretch (basic and acidic residues) spans Leu-440 to Arg-453. A disordered region spans residues Leu-440–Phe-479. The segment covering Glu-470–Phe-479 has biased composition (acidic residues).

It belongs to the TRAFAC class OBG-HflX-like GTPase superfamily. OBG GTPase family. As to quaternary structure, monomer. Requires Mg(2+) as cofactor.

Its subcellular location is the cytoplasm. An essential GTPase which binds GTP, GDP and possibly (p)ppGpp with moderate affinity, with high nucleotide exchange rates and a fairly low GTP hydrolysis rate. Plays a role in control of the cell cycle, stress response, ribosome biogenesis and in those bacteria that undergo differentiation, in morphogenesis control. This Streptomyces avermitilis (strain ATCC 31267 / DSM 46492 / JCM 5070 / NBRC 14893 / NCIMB 12804 / NRRL 8165 / MA-4680) protein is GTPase Obg.